We begin with the raw amino-acid sequence, 209 residues long: Ribosomal RNA large subunit methyltransferase E (209 aa).

5 residues coordinate S-adenosyl-L-methionine: G63, W65, D83, D99, and D124. K164 acts as the Proton acceptor in catalysis.

Belongs to the class I-like SAM-binding methyltransferase superfamily. RNA methyltransferase RlmE family.

The protein localises to the cytoplasm. The enzyme catalyses uridine(2552) in 23S rRNA + S-adenosyl-L-methionine = 2'-O-methyluridine(2552) in 23S rRNA + S-adenosyl-L-homocysteine + H(+). Its function is as follows. Specifically methylates the uridine in position 2552 of 23S rRNA at the 2'-O position of the ribose in the fully assembled 50S ribosomal subunit. The protein is Ribosomal RNA large subunit methyltransferase E of Vibrio cholerae serotype O1 (strain ATCC 39541 / Classical Ogawa 395 / O395).